The sequence spans 168 residues: Ribosome maturation factor RimP (168 aa).

Belongs to the RimP family.

It is found in the cytoplasm. In terms of biological role, required for maturation of 30S ribosomal subunits. This Bordetella parapertussis (strain 12822 / ATCC BAA-587 / NCTC 13253) protein is Ribosome maturation factor RimP.